The following is a 1967-amino-acid chain: RQC trigger complex helicase SLH1 (1967 aa).

The Helicase ATP-binding 1 domain maps to Pro297–Met485. Residue Ala310–Thr317 participates in ATP binding. The DEVH box motif lies at Asp427 to His430. The Helicase C-terminal 1 domain maps to Asn516–Gly735. The region spanning Ala795 to Phe1100 is the SEC63 1 domain. Positions Tyr1149–Tyr1324 constitute a Helicase ATP-binding 2 domain. Ser1162–Thr1169 contributes to the ATP binding site. Residues Asp1266–His1269 carry the DEAH box motif. The 196-residue stretch at Met1355–Leu1550 folds into the Helicase C-terminal 2 domain. The SEC63 2 domain occupies Ala1626–Trp1776.

This sequence belongs to the helicase family. SKI2 subfamily. In terms of assembly, component of the RQT (ribosome quality control trigger) complex, composed of SLH1, CUE3, and RQT4. Interacts with CUE3. Interacts with RQT4. Interacts with HEL2. Associates with translating ribosomes.

Its subcellular location is the cytoplasm. It is found in the cytosol. It carries out the reaction ATP + H2O = ADP + phosphate + H(+). In terms of biological role, involved in activation of the ribosome quality control (RQC) pathway, a pathway that degrades nascent peptide chains during problematic translation. Drives the splitting of stalled ribosomes that are polyubiquitinated in a HEL2-dependent manner, as part of the ribosome quality control trigger (RQT) complex. Also represses the translation of non-poly(A) mRNAs together with SKI2. May block translation by inhibiting translation initiation factor 5B (FUN12) action on mRNAs lacking a 3' poly(A) structure. Involved in antiviral defense, preventing L-A dsRNA virus propagation by specifically blocking translation of viral mRNAs. The chain is RQC trigger complex helicase SLH1 from Saccharomyces cerevisiae (strain ATCC 204508 / S288c) (Baker's yeast).